We begin with the raw amino-acid sequence, 338 residues long: Mugineic-acid 3-dioxygenase (338 aa).

The Fe2OG dioxygenase domain maps to 180-283 (DISGGRVVVD…RLSVASFIVP (104 aa)). Fe cation contacts are provided by His-208, Asp-210, and His-264. Arg-274 lines the 2-oxoglutarate pocket.

It belongs to the iron/ascorbate-dependent oxidoreductase family. Fe(2+) serves as cofactor. L-ascorbate is required as a cofactor. In terms of tissue distribution, expressed in roots, but not in leaves.

The catalysed reaction is mugineate + 2-oxoglutarate + O2 = 3-epihydroxymugineate + succinate + CO2 + H(+). The enzyme catalyses 2'-deoxymugineate + 2-oxoglutarate + O2 = 3-epihydroxy-2'-deoxymugineate + succinate + CO2 + H(+). In terms of biological role, involved in the biosynthesis of mugineic acid family of phytosiderophores. Hydroxylates the C-3 positions of mugineic acid (MA) and 2'-deoxymugineic acid (DMA). May be involved in boron tolerance. The protein is Mugineic-acid 3-dioxygenase (IDS2) of Hordeum vulgare (Barley).